A 214-amino-acid chain; its full sequence is Ribonuclease HII (214 aa).

Residues 26–214 form the RNase H type-2 domain; that stretch reads EIVCGVDEAG…PVREAFDLIR (189 aa). Positions 32, 33, and 124 each coordinate a divalent metal cation.

The protein belongs to the RNase HII family. Requires Mn(2+) as cofactor. Mg(2+) serves as cofactor.

The protein resides in the cytoplasm. It catalyses the reaction Endonucleolytic cleavage to 5'-phosphomonoester.. In terms of biological role, endonuclease that specifically degrades the RNA of RNA-DNA hybrids. The polypeptide is Ribonuclease HII (Burkholderia mallei (strain NCTC 10247)).